A 334-amino-acid polypeptide reads, in one-letter code: F420-dependent glucose-6-phosphate dehydrogenase (334 aa).

Aspartate 38 is a binding site for coenzyme F420-(gamma-Glu)n. Histidine 39 (proton donor) is an active-site residue. Coenzyme F420-(gamma-Glu)n-binding positions include threonine 75 and 106 to 107 (TG). Catalysis depends on glutamate 108, which acts as the Proton acceptor. Residues asparagine 111, 175–176 (GG), and 178–179 (LV) each bind coenzyme F420-(gamma-Glu)n. Substrate is bound by residues threonine 193, lysine 196, lysine 257, and arginine 281.

The protein belongs to the F420-dependent glucose-6-phosphate dehydrogenase family. In terms of assembly, homodimer.

The enzyme catalyses oxidized coenzyme F420-(gamma-L-Glu)(n) + D-glucose 6-phosphate + H(+) = 6-phospho-D-glucono-1,5-lactone + reduced coenzyme F420-(gamma-L-Glu)(n). In terms of biological role, catalyzes the coenzyme F420-dependent oxidation of glucose 6-phosphate (G6P) to 6-phosphogluconolactone. The sequence is that of F420-dependent glucose-6-phosphate dehydrogenase from Kribbella flavida (strain DSM 17836 / JCM 10339 / NBRC 14399).